The following is a 769-amino-acid chain: 5-methyltetrahydropteroyltriglutamate--homocysteine methyltransferase (769 aa).

5-methyltetrahydropteroyltri-L-glutamate is bound by residues 18–21 and K127; that span reads RELK. Residues 447 to 449 and E500 each bind L-homocysteine; that span reads IGS. Residues 447 to 449 and E500 contribute to the L-methionine site; that span reads IGS. 5-methyltetrahydropteroyltri-L-glutamate-binding positions include 531–532 and W577; that span reads RC. D615 is a binding site for L-homocysteine. D615 is an L-methionine binding site. Residue E621 participates in 5-methyltetrahydropteroyltri-L-glutamate binding. Residues H657, C659, and E681 each coordinate Zn(2+). H710 (proton donor) is an active-site residue. Position 742 (C742) interacts with Zn(2+).

This sequence belongs to the vitamin-B12 independent methionine synthase family. The cofactor is Zn(2+).

It catalyses the reaction 5-methyltetrahydropteroyltri-L-glutamate + L-homocysteine = tetrahydropteroyltri-L-glutamate + L-methionine. The protein operates within amino-acid biosynthesis; L-methionine biosynthesis via de novo pathway; L-methionine from L-homocysteine (MetE route): step 1/1. Catalyzes the transfer of a methyl group from 5-methyltetrahydrofolate to homocysteine resulting in methionine formation. The polypeptide is 5-methyltetrahydropteroyltriglutamate--homocysteine methyltransferase (Chelativorans sp. (strain BNC1)).